A 288-amino-acid polypeptide reads, in one-letter code: Release factor glutamine methyltransferase (288 aa).

The S-adenosyl-L-methionine site is built by D142 and N186. 186–189 (NPPY) provides a ligand contact to substrate.

This sequence belongs to the protein N5-glutamine methyltransferase family. PrmC subfamily.

It carries out the reaction L-glutaminyl-[peptide chain release factor] + S-adenosyl-L-methionine = N(5)-methyl-L-glutaminyl-[peptide chain release factor] + S-adenosyl-L-homocysteine + H(+). In terms of biological role, methylates the class 1 translation termination release factors RF1/PrfA and RF2/PrfB on the glutamine residue of the universally conserved GGQ motif. The sequence is that of Release factor glutamine methyltransferase from Mycobacterium leprae (strain TN).